The sequence spans 179 residues: Probable chorismate pyruvate-lyase (179 aa).

Arg82, Leu120, and Glu165 together coordinate substrate.

Belongs to the UbiC family.

Its subcellular location is the cytoplasm. The enzyme catalyses chorismate = 4-hydroxybenzoate + pyruvate. The protein operates within cofactor biosynthesis; ubiquinone biosynthesis. In terms of biological role, removes the pyruvyl group from chorismate, with concomitant aromatization of the ring, to provide 4-hydroxybenzoate (4HB) for the ubiquinone pathway. This Vibrio parahaemolyticus serotype O3:K6 (strain RIMD 2210633) protein is Probable chorismate pyruvate-lyase.